A 417-amino-acid polypeptide reads, in one-letter code: Calreticulin (417 aa).

A signal peptide spans methionine 1 to alanine 17. The tract at residues glutamate 18 to glutamate 197 is N-domain. Ca(2+) is bound at residue glutamine 26. Lysine 48 bears the N6-acetyllysine mark. Ca(2+)-binding residues include lysine 62 and lysine 64. Cysteine 105 and cysteine 137 form a disulfide bridge. Residues tyrosine 109, lysine 111, tyrosine 128, and aspartate 135 each coordinate an alpha-D-glucoside. Lysine 159 bears the N6-acetyllysine mark. One copy of the 1-1 repeat lies at valine 191–phenylalanine 202. The segment at valine 191–glutamate 255 is 4 X approximate repeats. Residues serine 193–arginine 278 are disordered. A P-domain region spans residues aspartate 198 to tyrosine 308. Positions lysine 207–glutamate 251 are enriched in basic and acidic residues. Lysine 209 carries the post-translational modification N6-acetyllysine. 6 tandem repeats follow at residues aspartate 210–glutamate 221, aspartate 227–lysine 238, aspartate 244–glutamate 255, glycine 259–proline 269, glycine 273–proline 283, and glycine 287–proline 297. Positions aspartate 237–glutamate 270 are interaction with PPIB. Residues aspartate 252–tryptophan 261 show a composition bias toward acidic residues. Residues glycine 259–proline 297 form a 3 X approximate repeats region. The C-domain stretch occupies residues aspartate 309–leucine 417. An alpha-D-glucoside is bound at residue aspartate 317. Aspartate 328 serves as a coordination point for Ca(2+). The disordered stretch occupies residues threonine 350–leucine 417. Basic and acidic residues predominate over residues alanine 352–glutamate 379. Acidic residues predominate over residues glutamate 380–valine 409. Positions lysine 414–leucine 417 match the Prevents secretion from ER motif.

It belongs to the calreticulin family. In terms of assembly, monomer. Component of an EIF2 complex at least composed of CELF1/CUGBP1, CALR, CALR3, EIF2S1, EIF2S2, HSP90B1 and HSPA5. Interacts with PDIA3/ERp57 and SPACA9. Interacts with TRIM21. Interacts with NR3C1. Interacts with PPIB. Interacts (via P-domain) with PDIA5. Interacts with GABARAP. Interacts with CLCC1.

Its subcellular location is the endoplasmic reticulum lumen. It is found in the cytoplasm. The protein resides in the cytosol. It localises to the secreted. The protein localises to the extracellular space. Its subcellular location is the extracellular matrix. It is found in the cell surface. The protein resides in the sarcoplasmic reticulum lumen. It localises to the cytoplasmic vesicle. The protein localises to the secretory vesicle. Its subcellular location is the cortical granule. It is found in the cytoplasmic granule. Functionally, calcium-binding chaperone that promotes folding, oligomeric assembly and quality control in the endoplasmic reticulum (ER) via the calreticulin/calnexin cycle. This lectin interacts transiently with almost all of the monoglucosylated glycoproteins that are synthesized in the ER. Interacts with the DNA-binding domain of NR3C1 and mediates its nuclear export. Involved in maternal gene expression regulation. May participate in oocyte maturation via the regulation of calcium homeostasis. This is Calreticulin (CALR) from Chlorocebus aethiops (Green monkey).